We begin with the raw amino-acid sequence, 497 residues long: Cobyric acid synthase (497 aa).

The region spanning 257 to 431 is the GATase cobBQ-type domain; it reads WLRVAAVRLP…WHGLLDNDDF (175 aa). Cys338 serves as the catalytic Nucleophile. His423 is a catalytic residue.

It belongs to the CobB/CobQ family. CobQ subfamily.

It participates in cofactor biosynthesis; adenosylcobalamin biosynthesis. Functionally, catalyzes amidations at positions B, D, E, and G on adenosylcobyrinic A,C-diamide. NH(2) groups are provided by glutamine, and one molecule of ATP is hydrogenolyzed for each amidation. This is Cobyric acid synthase from Mycolicibacterium paratuberculosis (strain ATCC BAA-968 / K-10) (Mycobacterium paratuberculosis).